The sequence spans 445 residues: Ribosomal protein uS12 methylthiotransferase RimO (445 aa).

Residues 11 to 121 (PKISFVSLGC…VLDAVHRASP (111 aa)) enclose the MTTase N-terminal domain. The [4Fe-4S] cluster site is built by Cys-20, Cys-56, Cys-85, Cys-152, Cys-156, and Cys-159. Positions 138 to 375 (LTPRHYAYLK…MARQQKISAR (238 aa)) constitute a Radical SAM core domain. The region spanning 378–444 (KRKVGTRQQI…EYDLHGTVAG (67 aa)) is the TRAM domain.

This sequence belongs to the methylthiotransferase family. RimO subfamily. Requires [4Fe-4S] cluster as cofactor.

The protein localises to the cytoplasm. It carries out the reaction L-aspartate(89)-[ribosomal protein uS12]-hydrogen + (sulfur carrier)-SH + AH2 + 2 S-adenosyl-L-methionine = 3-methylsulfanyl-L-aspartate(89)-[ribosomal protein uS12]-hydrogen + (sulfur carrier)-H + 5'-deoxyadenosine + L-methionine + A + S-adenosyl-L-homocysteine + 2 H(+). Catalyzes the methylthiolation of an aspartic acid residue of ribosomal protein uS12. The protein is Ribosomal protein uS12 methylthiotransferase RimO of Bradyrhizobium sp. (strain ORS 278).